Here is a 178-residue protein sequence, read N- to C-terminus: Large ribosomal subunit protein uL6 (178 aa).

The protein belongs to the universal ribosomal protein uL6 family. In terms of assembly, part of the 50S ribosomal subunit.

Its function is as follows. This protein binds to the 23S rRNA, and is important in its secondary structure. It is located near the subunit interface in the base of the L7/L12 stalk, and near the tRNA binding site of the peptidyltransferase center. This chain is Large ribosomal subunit protein uL6, found in Francisella tularensis subsp. novicida (strain U112).